A 77-amino-acid chain; its full sequence is U8-lycotoxin-Ls1w (77 aa).

Positions 1–20 (MKLIIFTGLVLFAIVSLIEA) are cleaved as a signal peptide. The propeptide occupies 21 to 26 (QAENEK).

This sequence belongs to the neurotoxin 19 (CSTX) family. 08 (U8-Lctx) subfamily. In terms of processing, contains 4 disulfide bonds. As to expression, expressed by the venom gland.

The protein resides in the secreted. This Lycosa singoriensis (Wolf spider) protein is U8-lycotoxin-Ls1w.